The sequence spans 122 residues: Lycotoxin-Pa4a (122 aa).

The signal sequence occupies residues 1-20 (MKLGIFFSVFFLAMIHSCLS). The propeptide occupies 21–47 (ETNEDKNLESYFREDDLKALSFGEYAR). 4 disulfide bridges follow: Cys-58–Cys-73, Cys-65–Cys-82, Cys-72–Cys-100, and Cys-84–Cys-98.

The protein belongs to the neurotoxin 19 (CSTX) family. In terms of tissue distribution, expressed by the venom gland.

Its subcellular location is the secreted. The protein resides in the target cell membrane. Its function is as follows. Potent antibacterial peptide with anti-inflammatory properties. Inhibits both Gram-negative and Gram-positive bacteria by disrupting both the outer membrane and the cytosolic membrane of bacteria. Also downregulates the expression of pro-inflammatory mediators (cyclooxygenase-2 (PTGS2/COX2), nitric oxide-induced synthase (NOS2), IL-1 beta (IL1B), TNF-alpha (TNF)) and upregulates the level of anti-inflammatory cytokine (IL10) by inactivating mitogen-activated protein kinase signaling in a lipopolysaccharide-stimulated murine macrophage cell line. This is Lycotoxin-Pa4a from Pardosa astrigera (Wolf spider).